We begin with the raw amino-acid sequence, 348 residues long: LIM domain-containing protein unc-97 (348 aa).

LIM zinc-binding domains lie at 21–73 (CVRC…CEHD), 82–132 (CGKC…CREC), 146–196 (CHKC…CLRC), 205–255 (CGAC…CEQH), and 264–315 (CFKC…CKRC).

As to quaternary structure, interacts with unc-98. Component of an integrin containing attachment complex, composed of at least pat-2, pat-3, pat-4, pat-6, unc-52, unc-97 and unc-112. In terms of tissue distribution, restricted to tissue types that attach to the hypodermis, specifically body wall muscles, vulval muscles, and mechanosensory neurons.

The protein resides in the cell junction. It localises to the adherens junction. It is found in the nucleus. In terms of biological role, component of an integrin containing attachment complex, which is required for muscle development and maintenance. Probably function in adherens junction. Affects the structural integrity of the integrin containing muscle adherens junctions and contributes to the mechanosensory functions of touch neurons. This Caenorhabditis elegans protein is LIM domain-containing protein unc-97.